Consider the following 596-residue polypeptide: MGKIQELSPELINQIAAGEVIESAHSVVKELMENSMDAGATQMDIESKDGGLSLLRITDNGSGIDPEDIEPALKRHATSKIRDYGDLENVLSYGFRGEALASIASVSRLTLESGIKNQKTAWKICSIGGKISEKEEIPGFVGTKILVEELFFNTPVRRKFLKSVRSEDKKIRDRVTTQALARHDVRFRLFQDGKEVFVLPSRENKKDRIVDLFGENFRDHLLEVSLERGGLNATGYISDPDFYKSNRTGQFVFVNGRPVEIKYGSTLLKKAYDELLPPNGHPYCFLFFEIDPSRVDVNVHPAKKEIRFLDEEGFNGFFLTLIQKELRSSTPVSFLELKKRLLRPTPETFKTSSLYQAHSSSRSGESPLLSRELFTEVPRQEGFDLDRMGPGASLSALTDNVVKHSSFVPKKHFGVLFETFILAEAEDGFYIIDQHTAHERIRYEEVLRKLEKKNYGIQPLLTPIRIDVSKQEQEDILNRKKEYEEVGIFLDPLGEDSVVLREIPAYMEPGEEKEIILDFLNRTEGKETTEPELYDLMAKCVACRSAIKKGDHLSDPILAEILNRLSYCENPSRCPHGRPTLVKLSRDDLERMFHRK.

It belongs to the DNA mismatch repair MutL/HexB family.

In terms of biological role, this protein is involved in the repair of mismatches in DNA. It is required for dam-dependent methyl-directed DNA mismatch repair. May act as a 'molecular matchmaker', a protein that promotes the formation of a stable complex between two or more DNA-binding proteins in an ATP-dependent manner without itself being part of a final effector complex. In Leptospira borgpetersenii serovar Hardjo-bovis (strain L550), this protein is DNA mismatch repair protein MutL.